Here is a 297-residue protein sequence, read N- to C-terminus: UDP-N-acetylenolpyruvoylglucosamine reductase (297 aa).

An FAD-binding PCMH-type domain is found at 26 to 191; that stretch reads KSGGTADWLF…VAARFRGHPG (166 aa). Arginine 171 is an active-site residue. The active-site Proton donor is serine 220. Glutamate 290 is a catalytic residue.

This sequence belongs to the MurB family. FAD serves as cofactor.

It localises to the cytoplasm. The catalysed reaction is UDP-N-acetyl-alpha-D-muramate + NADP(+) = UDP-N-acetyl-3-O-(1-carboxyvinyl)-alpha-D-glucosamine + NADPH + H(+). It functions in the pathway cell wall biogenesis; peptidoglycan biosynthesis. Its function is as follows. Cell wall formation. This is UDP-N-acetylenolpyruvoylglucosamine reductase from Novosphingobium aromaticivorans (strain ATCC 700278 / DSM 12444 / CCUG 56034 / CIP 105152 / NBRC 16084 / F199).